Here is a 99-residue protein sequence, read N- to C-terminus: Malonate decarboxylase acyl carrier protein (99 aa).

Position 25 is an O-(phosphoribosyl dephospho-coenzyme A)serine (S25).

This sequence belongs to the MdcC family. Post-translationally, covalently binds the prosthetic group of malonate decarboxylase.

It localises to the cytoplasm. Its function is as follows. Subunit of malonate decarboxylase, it is an acyl carrier protein to which acetyl and malonyl thioester residues are bound via a 2'-(5''-phosphoribosyl)-3'-dephospho-CoA prosthetic group and turn over during the catalytic mechanism. In Pseudomonas putida (strain W619), this protein is Malonate decarboxylase acyl carrier protein.